Consider the following 285-residue polypeptide: Dihydropteroate synthase (285 aa).

In terms of domain architecture, Pterin-binding spans 25-271 (TLVMGILNVT…DVKQIARMAK (247 aa)). Residue N32 coordinates Mg(2+). (7,8-dihydropterin-6-yl)methyl diphosphate contacts are provided by residues T72, D106, N125, D189, K225, and 259-261 (RVH).

This sequence belongs to the DHPS family. It depends on Mg(2+) as a cofactor.

The catalysed reaction is (7,8-dihydropterin-6-yl)methyl diphosphate + 4-aminobenzoate = 7,8-dihydropteroate + diphosphate. Its pathway is cofactor biosynthesis; tetrahydrofolate biosynthesis; 7,8-dihydrofolate from 2-amino-4-hydroxy-6-hydroxymethyl-7,8-dihydropteridine diphosphate and 4-aminobenzoate: step 1/2. Functionally, catalyzes the condensation of para-aminobenzoate (pABA) with 6-hydroxymethyl-7,8-dihydropterin diphosphate (DHPt-PP) to form 7,8-dihydropteroate (H2Pte), the immediate precursor of folate derivatives. The sequence is that of Dihydropteroate synthase (sul) from Bacillus subtilis (strain 168).